The following is an 82-amino-acid chain: Omega-conotoxin-like Am6.2 (82 aa).

A signal peptide spans methionine 1–alanine 22. A propeptide spanning residues valine 23–arginine 52 is cleaved from the precursor. 3 disulfide bridges follow: cysteine 56-cysteine 73, cysteine 63-cysteine 77, and cysteine 72-cysteine 81. Tryptophan 76 carries the 6'-bromotryptophan; partial; in Am6.2b (major form) modification.

It belongs to the conotoxin O1 family. Mostly non-hydroxylated. In terms of processing, two forms of this peptides have been described. Am6.2a (Am3136) is not unmodified, while Am6.2b (Am3214) is Trp-76 brominated. Both forms are found in venom with a much more abundant brominated form. As to expression, expressed by the venom duct.

It is found in the secreted. Its function is as follows. Omega-conotoxins act at presynaptic membranes, they bind and block voltage-gated calcium channels (Cav). The chain is Omega-conotoxin-like Am6.2 from Conus amadis (Amadis cone).